The primary structure comprises 262 residues: Acyl-[acyl-carrier-protein]--UDP-N-acetylglucosamine O-acyltransferase (262 aa).

This sequence belongs to the transferase hexapeptide repeat family. LpxA subfamily. As to quaternary structure, homotrimer.

It is found in the cytoplasm. It catalyses the reaction a (3R)-hydroxyacyl-[ACP] + UDP-N-acetyl-alpha-D-glucosamine = a UDP-3-O-[(3R)-3-hydroxyacyl]-N-acetyl-alpha-D-glucosamine + holo-[ACP]. It participates in glycolipid biosynthesis; lipid IV(A) biosynthesis; lipid IV(A) from (3R)-3-hydroxytetradecanoyl-[acyl-carrier-protein] and UDP-N-acetyl-alpha-D-glucosamine: step 1/6. Involved in the biosynthesis of lipid A, a phosphorylated glycolipid that anchors the lipopolysaccharide to the outer membrane of the cell. This chain is Acyl-[acyl-carrier-protein]--UDP-N-acetylglucosamine O-acyltransferase, found in Campylobacter curvus (strain 525.92).